The following is a 191-amino-acid chain: dTTP/UTP pyrophosphatase (191 aa).

The active-site Proton acceptor is the aspartate 70.

This sequence belongs to the Maf family. YhdE subfamily. Requires a divalent metal cation as cofactor.

It localises to the cytoplasm. It carries out the reaction dTTP + H2O = dTMP + diphosphate + H(+). The catalysed reaction is UTP + H2O = UMP + diphosphate + H(+). Its function is as follows. Nucleoside triphosphate pyrophosphatase that hydrolyzes dTTP and UTP. May have a dual role in cell division arrest and in preventing the incorporation of modified nucleotides into cellular nucleic acids. In Clostridium novyi (strain NT), this protein is dTTP/UTP pyrophosphatase.